The following is a 589-amino-acid chain: Aspartate--tRNA(Asp/Asn) ligase (589 aa).

L-aspartate is bound at residue glutamate 176. The aspartate stretch occupies residues 200–203; it reads QLFK. Arginine 222 provides a ligand contact to L-aspartate. ATP is bound by residues 222–224 and glutamine 231; that span reads RDE. Histidine 450 contacts L-aspartate. Glutamate 484 serves as a coordination point for ATP. Arginine 491 is a binding site for L-aspartate. Position 536–539 (536–539) interacts with ATP; that stretch reads GLDR.

The protein belongs to the class-II aminoacyl-tRNA synthetase family. Type 1 subfamily. As to quaternary structure, homodimer.

The protein localises to the cytoplasm. It carries out the reaction tRNA(Asx) + L-aspartate + ATP = L-aspartyl-tRNA(Asx) + AMP + diphosphate. In terms of biological role, aspartyl-tRNA synthetase with relaxed tRNA specificity since it is able to aspartylate not only its cognate tRNA(Asp) but also tRNA(Asn). Reaction proceeds in two steps: L-aspartate is first activated by ATP to form Asp-AMP and then transferred to the acceptor end of tRNA(Asp/Asn). The sequence is that of Aspartate--tRNA(Asp/Asn) ligase from Bacillus cytotoxicus (strain DSM 22905 / CIP 110041 / 391-98 / NVH 391-98).